A 430-amino-acid chain; its full sequence is Trigger factor (430 aa).

In terms of domain architecture, PPIase FKBP-type spans 163–248 (GNIAIIDFKG…IKDIKVKELP (86 aa)).

The protein belongs to the FKBP-type PPIase family. Tig subfamily.

Its subcellular location is the cytoplasm. The enzyme catalyses [protein]-peptidylproline (omega=180) = [protein]-peptidylproline (omega=0). In terms of biological role, involved in protein export. Acts as a chaperone by maintaining the newly synthesized protein in an open conformation. Functions as a peptidyl-prolyl cis-trans isomerase. The polypeptide is Trigger factor (Clostridium botulinum (strain Loch Maree / Type A3)).